We begin with the raw amino-acid sequence, 273 residues long: HMP-PP phosphatase (273 aa).

D8 acts as the Nucleophile in catalysis. Mg(2+) contacts are provided by D8, D10, and D212.

Belongs to the HAD-like hydrolase superfamily. Cof family. The cofactor is Mg(2+).

It carries out the reaction 4-amino-2-methyl-5-(diphosphooxymethyl)pyrimidine + H2O = 4-amino-2-methyl-5-(phosphooxymethyl)pyrimidine + phosphate + H(+). Its function is as follows. Catalyzes the hydrolysis of 4-amino-2-methyl-5-hydroxymethylpyrimidine pyrophosphate (HMP-PP) to 4-amino-2-methyl-5-hydroxymethylpyrimidine phosphate (HMP-P). The polypeptide is HMP-PP phosphatase (Yersinia enterocolitica serotype O:8 / biotype 1B (strain NCTC 13174 / 8081)).